An 891-amino-acid polypeptide reads, in one-letter code: DNA mismatch repair protein MutS (891 aa).

646 to 653 lines the ATP pocket; it reads GPNMAGKS.

Belongs to the DNA mismatch repair MutS family.

This protein is involved in the repair of mismatches in DNA. It is possible that it carries out the mismatch recognition step. This protein has a weak ATPase activity. The chain is DNA mismatch repair protein MutS from Rickettsia typhi (strain ATCC VR-144 / Wilmington).